A 342-amino-acid polypeptide reads, in one-letter code: Farnesyl pyrophosphate synthase 2 (342 aa).

3 residues coordinate isopentenyl diphosphate: K47, R50, and Q86. Mg(2+) contacts are provided by D93 and D97. R102 serves as a coordination point for dimethylallyl diphosphate. R103 contributes to the isopentenyl diphosphate binding site. K190, T191, Q229, K246, and K255 together coordinate dimethylallyl diphosphate.

This sequence belongs to the FPP/GGPP synthase family. The cofactor is Mg(2+).

The protein resides in the cytoplasm. The enzyme catalyses isopentenyl diphosphate + dimethylallyl diphosphate = (2E)-geranyl diphosphate + diphosphate. The catalysed reaction is isopentenyl diphosphate + (2E)-geranyl diphosphate = (2E,6E)-farnesyl diphosphate + diphosphate. Its pathway is isoprenoid biosynthesis; farnesyl diphosphate biosynthesis; farnesyl diphosphate from geranyl diphosphate and isopentenyl diphosphate: step 1/1. It participates in isoprenoid biosynthesis; geranyl diphosphate biosynthesis; geranyl diphosphate from dimethylallyl diphosphate and isopentenyl diphosphate: step 1/1. In terms of biological role, catalyzes the sequential condensation of isopentenyl pyrophosphate with the allylic pyrophosphates, dimethylallyl pyrophosphate, and then with the resultant geranylpyrophosphate to the ultimate product farnesyl pyrophosphate. The sequence is that of Farnesyl pyrophosphate synthase 2 (FPS2) from Arabidopsis thaliana (Mouse-ear cress).